Reading from the N-terminus, the 457-residue chain is Methylenetetrahydrofolate--tRNA-(uracil-5-)-methyltransferase TrmFO (457 aa).

7–12 lines the FAD pocket; sequence GAGLAG. Residues 38 to 58 are disordered; sequence FTSRQDEKTGTHDVRNATQTR. A compositionally biased stretch (basic and acidic residues) spans 40-52; sequence SRQDEKTGTHDVR.

It belongs to the MnmG family. TrmFO subfamily. FAD serves as cofactor.

It is found in the cytoplasm. It carries out the reaction uridine(54) in tRNA + (6R)-5,10-methylene-5,6,7,8-tetrahydrofolate + NADH + H(+) = 5-methyluridine(54) in tRNA + (6S)-5,6,7,8-tetrahydrofolate + NAD(+). It catalyses the reaction uridine(54) in tRNA + (6R)-5,10-methylene-5,6,7,8-tetrahydrofolate + NADPH + H(+) = 5-methyluridine(54) in tRNA + (6S)-5,6,7,8-tetrahydrofolate + NADP(+). Functionally, catalyzes the folate-dependent formation of 5-methyl-uridine at position 54 (M-5-U54) in all tRNAs. In Hydrogenobaculum sp. (strain Y04AAS1), this protein is Methylenetetrahydrofolate--tRNA-(uracil-5-)-methyltransferase TrmFO.